Consider the following 290-residue polypeptide: Glycine--tRNA ligase alpha subunit (290 aa).

It belongs to the class-II aminoacyl-tRNA synthetase family. In terms of assembly, tetramer of two alpha and two beta subunits.

It is found in the cytoplasm. The catalysed reaction is tRNA(Gly) + glycine + ATP = glycyl-tRNA(Gly) + AMP + diphosphate. The sequence is that of Glycine--tRNA ligase alpha subunit from Gloeobacter violaceus (strain ATCC 29082 / PCC 7421).